Here is a 380-residue protein sequence, read N- to C-terminus: Cytochrome b (380 aa).

4 consecutive transmembrane segments (helical) span residues Ser-34 to Met-54, Trp-78 to Ile-99, Trp-114 to Leu-134, and Phe-179 to Val-199. Residues His-84 and His-98 each contribute to the heme b site. His-183 and His-197 together coordinate heme b. His-202 contributes to the a ubiquinone binding site. The next 4 membrane-spanning stretches (helical) occupy residues Thr-227–Phe-247, Leu-289–Asn-309, Leu-321–Ser-341, and Tyr-348–Ile-369.

It belongs to the cytochrome b family. As to quaternary structure, the main subunits of complex b-c1 are: cytochrome b, cytochrome c1 and the Rieske protein. Heme b is required as a cofactor.

It is found in the mitochondrion inner membrane. In terms of biological role, component of the ubiquinol-cytochrome c reductase complex (complex III or cytochrome b-c1 complex) that is part of the mitochondrial respiratory chain. The b-c1 complex mediates electron transfer from ubiquinol to cytochrome c. Contributes to the generation of a proton gradient across the mitochondrial membrane that is then used for ATP synthesis. In Strongylocentrotus purpuratus (Purple sea urchin), this protein is Cytochrome b (MT-CYB).